The sequence spans 178 residues: ATP-dependent protease subunit HslV (178 aa).

The active site involves Thr-7. Na(+)-binding residues include Gly-162, Cys-165, and Thr-168.

The protein belongs to the peptidase T1B family. HslV subfamily. As to quaternary structure, a double ring-shaped homohexamer of HslV is capped on each side by a ring-shaped HslU homohexamer. The assembly of the HslU/HslV complex is dependent on binding of ATP.

Its subcellular location is the cytoplasm. It catalyses the reaction ATP-dependent cleavage of peptide bonds with broad specificity.. Allosterically activated by HslU binding. Functionally, protease subunit of a proteasome-like degradation complex believed to be a general protein degrading machinery. This Dechloromonas aromatica (strain RCB) protein is ATP-dependent protease subunit HslV.